Reading from the N-terminus, the 306-residue chain is Serine/threonine-protein kinase csk1 (306 aa).

Residues 11 to 306 enclose the Protein kinase domain; it reads LTDIRHLTDG…KVSARLSQYA (296 aa). ATP-binding positions include 17 to 25 and Lys40; that span reads LTDGTISEV. Asp129 (proton acceptor) is an active-site residue.

Belongs to the protein kinase superfamily. CMGC Ser/Thr protein kinase family. CDC2/CDKX subfamily.

The enzyme catalyses L-seryl-[protein] + ATP = O-phospho-L-seryl-[protein] + ADP + H(+). It carries out the reaction L-threonyl-[protein] + ATP = O-phospho-L-threonyl-[protein] + ADP + H(+). Its function is as follows. Acts as a CAK-activating kinase that specifically activates crk1 of the crk1-mcs2 CAK complex. This Schizosaccharomyces pombe (strain 972 / ATCC 24843) (Fission yeast) protein is Serine/threonine-protein kinase csk1 (csk1).